A 158-amino-acid chain; its full sequence is Probable flavodoxin 1 (158 aa).

Positions 4 to 144 (ALITYASMSG…SCRAFARGFL (141 aa)) constitute a Flavodoxin-like domain.

It belongs to the flavodoxin family. It depends on FMN as a cofactor.

Its function is as follows. Low-potential electron donor to a number of redox enzymes. In Bacillus subtilis (strain 168), this protein is Probable flavodoxin 1 (ykuN).